The chain runs to 113 residues: Hydrogenase maturation factor HypA (113 aa).

His-2 lines the Ni(2+) pocket. Residues Cys-73, Cys-76, Cys-89, and Cys-92 each coordinate Zn(2+).

Belongs to the HypA/HybF family.

In terms of biological role, involved in the maturation of [NiFe] hydrogenases. Required for nickel insertion into the metal center of the hydrogenase. This is Hydrogenase maturation factor HypA from Rhodopseudomonas palustris (strain TIE-1).